A 242-amino-acid polypeptide reads, in one-letter code: MLANPLSQFLIKPIIPLEALGYNISITNSAVAMIFVSIAASMLLITAFVNSKLVPSRWQAFGEILYESNIKLVHSIIGPQGKKFFPLILTLFLFISLGNILGMVPHAFTFTSHIIVTFSLAMIVFTTTLVYGIYRHKLGFFSLFLPKNIPLWLAPIMVIIELCVFISKPISLSLRLTANMVAGHILLKIIAWSIVSLTWLFKPLPIALVIVLIGFELFISILQAYIFTILSCVYLRDVVNLH.

6 helical membrane-spanning segments follow: residues Ser-29–Val-49, Phe-84–Val-104, Ile-114–Tyr-134, Phe-140–Ile-160, Val-181–Phe-201, and Ile-206–Ile-226.

This sequence belongs to the ATPase A chain family. As to quaternary structure, F-type ATPases have 2 components, CF(1) - the catalytic core - and CF(0) - the membrane proton channel. CF(1) has five subunits: alpha(3), beta(3), gamma(1), delta(1), epsilon(1). CF(0) has three main subunits: a(1), b(2) and c(9-12). The alpha and beta chains form an alternating ring which encloses part of the gamma chain. CF(1) is attached to CF(0) by a central stalk formed by the gamma and epsilon chains, while a peripheral stalk is formed by the delta and b chains.

The protein resides in the cell inner membrane. Its function is as follows. Key component of the proton channel; it plays a direct role in the translocation of protons across the membrane. This chain is ATP synthase subunit a, found in Orientia tsutsugamushi (strain Ikeda) (Rickettsia tsutsugamushi).